The primary structure comprises 302 residues: Cuticle collagen 40 (302 aa).

2 disordered regions span residues 79 to 103 and 119 to 302; these read RIKRDTRSRRGGYAEGGAAAGGGGG and AGAP…APGY. Gly residues predominate over residues 91–103; it reads YAEGGAAAGGGGG. 5 triple-helical region regions span residues 114–143, 162–185, 189–221, 226–252, and 255–290; these read GAAGPAGAPGKDGAPGEDGKAGNPGTAGSD, GPAGPAGGPGPAGPPGPAGADGNT, GGEGPAGPPGPPGPAGNPGTDGAPGNPGAPGQV, GTPGPAGAAGPPGPPGPAGNPGSAGAS, and GPAGPAGDAGPDGAPGNAGAPGAPGEAGAPGSGGGC. Residues 137–154 are compositionally biased toward low complexity; it reads PGTAGSDAEAAAAPTASD. The span at 194–203 shows a compositional bias: pro residues; the sequence is AGPPGPPGPA. Low complexity-rich tracts occupy residues 205 to 234 and 245 to 281; these read NPGTDGAPGNPGAPGQVTETPGTPGPAGAA and NPGSAGASEPGPAGPAGDAGPDGAPGNAGAPGAPGEA. The span at 293 to 302 shows a compositional bias: pro residues; the sequence is CPPPRTAPGY.

Belongs to the cuticular collagen family. As to quaternary structure, collagen polypeptide chains are complexed within the cuticle by disulfide bonds and other types of covalent cross-links.

Nematode cuticles are composed largely of collagen-like proteins. The cuticle functions both as an exoskeleton and as a barrier to protect the worm from its environment. The chain is Cuticle collagen 40 (col-40) from Caenorhabditis elegans.